Here is a 547-residue protein sequence, read N- to C-terminus: Cytochrome P450 monooxygenase cpsD (547 aa).

Residues 18-38 (LTGAALVVTLITSVIIVAADL) form a helical membrane-spanning segment. Cysteine 476 contacts heme. The disordered stretch occupies residues 528–547 (RRRDARRTHEALGSKLKPEE). The segment covering 534–547 (RTHEALGSKLKPEE) has biased composition (basic and acidic residues).

Belongs to the cytochrome P450 family. Requires heme as cofactor.

The protein localises to the membrane. It catalyses the reaction campesine B + campesine C + reduced [NADPH--hemoprotein reductase] + O2 = campesine D + oxidized [NADPH--hemoprotein reductase] + 2 H2O + 2 H(+). The enzyme catalyses 2 campesine B + reduced [NADPH--hemoprotein reductase] + O2 = campesine F + oxidized [NADPH--hemoprotein reductase] + 2 H2O + H(+). It carries out the reaction campesine C + campesine A + reduced [NADPH--hemoprotein reductase] + O2 = campesine E + oxidized [NADPH--hemoprotein reductase] + 2 H2O + 2 H(+). It participates in alkaloid biosynthesis. Cytochrome P450 monooxygenase; part of the gene cluster that mediates the biosynthesis of campesine G, a dimeric indole piperazine alkaloid that shows good insecticidal activity Galleria mellonella. Within the pathway, cpsD acts as a dimerase that simultaneously catalyzes one C-C bond (C3-C3') and two C-N bonds (C2-N16' and C2'-N16) coupling reactions between campesines B and C to produce a heterodimer with unexpected 6/5/6/6/6/6/5/6 eight-ring scaffold called campesine D. CpsD is also able to catalyze oxidative heterocoupling od campesines A with B to produce campesine F and campesines A with C to produce campesine E. The non-canonical non-ribosomal peptide synthetase cpsA catalyzes the first steps of the pathway by producing L-tryptophanal and L-valinal from their respective amino-acids. These products condensate spontaneously to form trypyl-valyl pyrazine also known as didehydrocampesine A. The NmrA-like family domain-containing oxidoreductase cpsB is the next enzyme in cps pathway and reduces the unstable didehydrocampesine A to campesine A. The methyltransferase cpsF and the acetyltransferase cpsE both recognize N13 of piperazine ring to carry out methylation and acetylation of campesine A to produce campesine C and B, respectively. The cytochrome P450 monooxygenase cpsD then acts as a dimerase that catalyzes oxidative heterocoupling between campesine B and C to produce heterodimers with unexpected 6/5/6/6/6/6/5/6 eight-ring scaffold called campesine D. Finally,the cytochrome P450 monooxygenase cpsC is a regioselective dehydrogenase that catalyzes dehydrogenation reaction towards C2-N1 to produce campesine G. This chain is Cytochrome P450 monooxygenase cpsD, found in Aspergillus campestris (strain IBT 28561).